Reading from the N-terminus, the 404-residue chain is Probable ribosomal oxygenase HI_0396 (404 aa).

Residues 102 to 231 (ELGQLWNKFG…LIDGISKGFC (130 aa)) form the JmjC domain. His135, Asp137, and His199 together coordinate Fe cation.

It belongs to the ROX family. Fe(2+) is required as a cofactor.

In terms of biological role, oxygenase that catalyzes the hydroxylation of a ribosomal protein. The polypeptide is Probable ribosomal oxygenase HI_0396 (Haemophilus influenzae (strain ATCC 51907 / DSM 11121 / KW20 / Rd)).